The sequence spans 399 residues: Nicotinate phosphoribosyltransferase (399 aa).

Histidine 217 is modified (phosphohistidine; by autocatalysis).

The protein belongs to the NAPRTase family. Post-translationally, transiently phosphorylated on a His residue during the reaction cycle. Phosphorylation strongly increases the affinity for substrates and increases the rate of nicotinate D-ribonucleotide production. Dephosphorylation regenerates the low-affinity form of the enzyme, leading to product release.

The catalysed reaction is nicotinate + 5-phospho-alpha-D-ribose 1-diphosphate + ATP + H2O = nicotinate beta-D-ribonucleotide + ADP + phosphate + diphosphate. It functions in the pathway cofactor biosynthesis; NAD(+) biosynthesis; nicotinate D-ribonucleotide from nicotinate: step 1/1. Catalyzes the synthesis of beta-nicotinate D-ribonucleotide from nicotinate and 5-phospho-D-ribose 1-phosphate at the expense of ATP. The protein is Nicotinate phosphoribosyltransferase of Burkholderia mallei (strain ATCC 23344).